A 595-amino-acid chain; its full sequence is Leiomodin-1 (595 aa).

Disordered stretches follow at residues 1 to 69 (MSKV…EAML), 81 to 322 (QREM…KVKN), and 467 to 568 (DKQR…QEKN). At Ser12 the chain carries Phosphoserine. Positions 27 to 40 (EEMEELEKELDVVD) are enriched in acidic residues. Basic and acidic residues-rich tracts occupy residues 81–110 (QREMSVDESKQVGRKTDAKNGEEKDSDASR), 117–127 (QDSDLGKEPKK), 134–192 (FSRD…EKTG), 200–223 (SRDKDKKKEEVKEPSKKEEVKLTA), 230–249 (GRREDGRLKESSKENKKPED), 257–287 (RDWRKEDEKVKKEENQPDKEVREESKTKAPE), 467–476 (DKQRQKRLQE), and 484–493 (SGEKKDRLEV). The residue at position 85 (Ser85) is a Phosphoserine. The residue at position 135 (Ser135) is a Phosphoserine. 8 repeat units span residues 165–179 (AAVDRKESGKDGREE), 180–195 (RAAAARKEEEKTGSVK), 196–211 (NAGLSRDKDKKKEEVK), 212–226 (EPSKKEEVKLTAESR), 227–240 (NTVGRREDGRLKES), 242–255 (KENKKPEDEGIGSG), 256–271 (GRDWRKEDEKVKKEEN), and 272–288 (QPDKEVREESKTKAPEK). An 8 X approximate tandem repeats region spans residues 165–288 (AAVDRKESGK…EESKTKAPEK (124 aa)). Positions 503–522 (SPKPSPQPSPKPAPKNSPKK) are 5 X 4 AA approximate tandem repeats. Pro residues-rich tracts occupy residues 505–517 (KPSPQPSPKPAPK) and 527–538 (AAPPPPPPPLAP). Ser550 carries the phosphoserine modification. The region spanning 569–588 (SRDQLLAAIRSSNLKQLKKV) is the WH2 domain.

The protein belongs to the tropomodulin family. As to expression, detected in aorta, urinary bladder and uterus (at protein level). Detected in smooth muscle cells. Detected in aorta, bladder, colon, intestine, stomach and uterus.

Its subcellular location is the cytoplasm. The protein localises to the myofibril. The protein resides in the sarcomere. It is found in the cytoskeleton. Required for proper contractility of visceral smooth muscle cells. Mediates nucleation of actin filaments. In Mus musculus (Mouse), this protein is Leiomodin-1 (Lmod1).